The sequence spans 329 residues: MSEASKSIMDLLSEVVKITDMTMDNEAVNKLKPQIKINPFYRAVQDVLVEQKSKIDLSTKMMKDLEAQENDERLDTMLKAEGVAGPDDSLLRIQEAAGTDQYEYRQQLLKVRRELENETKAFDKHCKKWCEYVEDVLQQQGEFRPITQQSTEKFMNKMSGKFNKVCFVLKQTACEEVIQLKKRYLDARRKRRNFSKTSTEILNEYFLANINHPYPSEEVKQALAMQCNISVAQVSNWFGNKRIRYKKTMAKNEDERRENRKPEDRPPPGAPGAPYSLVPNAFAGMMNPYQMMLPGHQFPIGVAPFNFSMYNPEMMAQYQQSLQNPNQTR.

The PBC domain maps to 3–186 (EASKSIMDLL…VIQLKKRYLD (184 aa)). Positions 10–90 (DLLSEVVKIT…EGVAGPDDSL (81 aa)) are PBC-A. The tract at residues 93–186 (IQEAAGTDQY…VIQLKKRYLD (94 aa)) is PBC-B. A DNA-binding region (homeobox; TALE-type) is located at residues 187–249 (ARRKRRNFSK…NKRIRYKKTM (63 aa)). Residues 248 to 275 (TMAKNEDERRENRKPEDRPPPGAPGAPY) are disordered. Residues 250–266 (AKNEDERRENRKPEDRP) are compositionally biased toward basic and acidic residues.

The protein belongs to the TALE/PBX homeobox family. As to expression, expressed in head dopaminergic neurons.

It localises to the nucleus. Its function is as follows. Plays a role in regulating gene expression in dopaminergic neurons, acting redundantly with homeobox protein ceh-20 in head neurons. May activate dopamine pathway genes in concert with ETS domain-containing protein ast-1, and homeobox proteins ceh-43 and ceh-20. This is Homeobox protein ceh-40 (ceh-40) from Caenorhabditis elegans.